Consider the following 1311-residue polypeptide: Clustered mitochondria protein homolog (1311 aa).

The interval 1-46 (MAATNEVIPTSENPSDVSGSSQKLATEETALANGVDHEEEDSGEAG) is disordered. Polar residues predominate over residues 7 to 24 (VIPTSENPSDVSGSSQKL). The 245-residue stretch at 335–579 (DITRTQENYL…RVTPLDITWM (245 aa)) folds into the Clu domain. Disordered stretches follow at residues 629-691 (ERKR…QERI) and 915-965 (QSQT…VNAS). A compositionally biased stretch (basic and acidic residues) spans 655 to 691 (EASKSDEPTENGELAKKADESDKDAEPSKPAADQERI). Residues 915–930 (QSQTEAAAAPPTTNGE) show a composition bias toward polar residues. TPR repeat units follow at residues 1034–1067 (ARVY…SERT), 1076–1109 (LLNY…WKVV), and 1118–1151 (ITTI…CEEV). Positions 1236–1311 (VSPRVTLGQT…RGGAAAAAGK (76 aa)) are disordered. Over residues 1242–1253 (LGQTQLQPQVGQ) the composition is skewed to polar residues. Basic and acidic residues predominate over residues 1259 to 1279 (AGRDSRSSRGLDSRSIDELLK). Positions 1289–1303 (KNKKRPGRSNPKRRG) are enriched in basic residues.

The protein belongs to the CLU family. May associate with the eukaryotic translation initiation factor 3 (eIF-3) complex.

The protein resides in the cytoplasm. MRNA-binding protein involved in proper cytoplasmic distribution of mitochondria. This chain is Clustered mitochondria protein homolog, found in Sclerotinia sclerotiorum (strain ATCC 18683 / 1980 / Ss-1) (White mold).